The following is a 197-amino-acid chain: Phospholipid hydroperoxide glutathione peroxidase (197 aa).

S40 carries the post-translational modification Phosphoserine. U73 is an active-site residue. Position 73 (U73) is a non-standard amino acid, selenocysteine.

It belongs to the glutathione peroxidase family. As to quaternary structure, monomer. Has a tendency to form higher mass oligomers. Interacts with FUNDC1; this interaction promotes GPX4 recruitment into mitochondria through TOM/TIM complex where it is degraded by mitophagy.

Its subcellular location is the mitochondrion. The protein resides in the cytoplasm. It catalyses the reaction a hydroperoxy polyunsaturated fatty acid + 2 glutathione = a hydroxy polyunsaturated fatty acid + glutathione disulfide + H2O. It carries out the reaction 2 glutathione + H2O2 = glutathione disulfide + 2 H2O. The enzyme catalyses tert-butyl hydroperoxide + 2 glutathione = tert-butanol + glutathione disulfide + H2O. The catalysed reaction is cumene hydroperoxide + 2 glutathione = 2-phenylpropan-2-ol + glutathione disulfide + H2O. It catalyses the reaction (9S)-hydroperoxy-(10E,12Z)-octadecadienoate + 2 glutathione = (9S)-hydroxy-(10E,12Z)-octadecadienoate + glutathione disulfide + H2O. It carries out the reaction (13S)-hydroperoxy-(9Z,11E)-octadecadienoate + 2 glutathione = (13S)-hydroxy-(9Z,11E)-octadecadienoate + glutathione disulfide + H2O. The enzyme catalyses (5S)-hydroperoxy-(6E,8Z,11Z,14Z)-eicosatetraenoate + 2 glutathione = (5S)-hydroxy-(6E,8Z,11Z,14Z)-eicosatetraenoate + glutathione disulfide + H2O. The catalysed reaction is (12R)-hydroperoxy-(5Z,8Z,10E,14Z)-eicosatetraenoate + 2 glutathione = (12R)-hydroxy-(5Z,8Z,10E,14Z)-eicosatetraenoate + glutathione disulfide + H2O. It catalyses the reaction (12S)-hydroperoxy-(5Z,8Z,10E,14Z)-eicosatetraenoate + 2 glutathione = (12S)-hydroxy-(5Z,8Z,10E,14Z)-eicosatetraenoate + glutathione disulfide + H2O. It carries out the reaction (15S)-hydroperoxy-(5Z,8Z,11Z,13E)-eicosatetraenoate + 2 glutathione = (15S)-hydroxy-(5Z,8Z,11Z,13E)-eicosatetraenoate + glutathione disulfide + H2O. The enzyme catalyses (5S)-hydroperoxy-(6E,8Z,11Z,14Z,17Z)-eicosapentaenoate + 2 glutathione = (5S)-hydroxy-(6E,8Z,11Z,14Z,17Z)-eicosapentaenoate + glutathione disulfide + H2O. The catalysed reaction is (12S)-hydroperoxy-(5Z,8Z,10E,14Z,17Z)-eicosapentaenoate + 2 glutathione = (12S)-hydroxy-(5Z,8Z,10E,14Z,17Z)-eicosapentaenoate + glutathione disulfide + H2O. It catalyses the reaction (15S)-hydroperoxy-(5Z,8Z,11Z,13E,17Z)-eicosapentaenoate + 2 glutathione = (15S)-hydroxy-(5Z,8Z,11Z,13E,17Z)-eicosapentaenoate + glutathione disulfide + H2O. It carries out the reaction (15S)-hydroperoxy-(11Z,13E)-eicosadienoate + 2 glutathione = (15S)-hydroxy-(11Z,13E)-eicosadienoate + glutathione disulfide + H2O. The enzyme catalyses (17S)-hydroperoxy-(4Z,7Z,10Z,13Z,15E,19Z)-docosahexaenoate + 2 glutathione = (17S)-hydroxy-(4Z,7Z,10Z,13Z,15E,19Z)-docosahexaenoate + glutathione disulfide + H2O. The catalysed reaction is a hydroperoxy-1,2-diacyl-glycero-3-phosphocholine + 2 glutathione = a hydroxy-1,2-diacyl-glycero-3-phosphocholine + glutathione disulfide + H2O. In terms of biological role, essential antioxidant peroxidase that directly reduces phospholipid hydroperoxide even if they are incorporated in membranes and lipoproteins. Can also reduce fatty acid hydroperoxide, cholesterol hydroperoxide and thymine hydroperoxide. Plays a key role in protecting cells from oxidative damage by preventing membrane lipid peroxidation. Required to prevent cells from ferroptosis, a non-apoptotic cell death resulting from an iron-dependent accumulation of lipid reactive oxygen species. The presence of selenocysteine (Sec) versus Cys at the active site is essential for life: it provides resistance to overoxidation and prevents cells against ferroptosis. The presence of Sec at the active site is also essential for the survival of a specific type of parvalbumin-positive interneurons, thereby preventing against fatal epileptic seizures. May be required to protect cells from the toxicity of ingested lipid hydroperoxides. Required for normal sperm development and male fertility. Essential for maturation and survival of photoreceptor cells. Plays a role in a primary T-cell response to viral and parasitic infection by protecting T-cells from ferroptosis and by supporting T-cell expansion. Plays a role of glutathione peroxidase in platelets in the arachidonic acid metabolism. Reduces hydroperoxy ester lipids formed by a 15-lipoxygenase that may play a role as down-regulator of the cellular 15-lipoxygenase pathway. Can also reduce small soluble hydroperoxides such as H2O2, cumene hydroperoxide and tert-butyl hydroperoxide. The sequence is that of Phospholipid hydroperoxide glutathione peroxidase from Bos taurus (Bovine).